A 260-amino-acid chain; its full sequence is Small ribosomal subunit protein uS2 (260 aa).

This sequence belongs to the universal ribosomal protein uS2 family.

The protein is Small ribosomal subunit protein uS2 of Streptococcus gordonii (strain Challis / ATCC 35105 / BCRC 15272 / CH1 / DL1 / V288).